We begin with the raw amino-acid sequence, 510 residues long: Bifunctional purine biosynthesis protein PurH (510 aa).

Positions 1–145 (MSKRALISVS…KNFEDVLVVT (145 aa)) constitute an MGS-like domain.

It belongs to the PurH family.

The enzyme catalyses (6R)-10-formyltetrahydrofolate + 5-amino-1-(5-phospho-beta-D-ribosyl)imidazole-4-carboxamide = 5-formamido-1-(5-phospho-D-ribosyl)imidazole-4-carboxamide + (6S)-5,6,7,8-tetrahydrofolate. The catalysed reaction is IMP + H2O = 5-formamido-1-(5-phospho-D-ribosyl)imidazole-4-carboxamide. Its pathway is purine metabolism; IMP biosynthesis via de novo pathway; 5-formamido-1-(5-phospho-D-ribosyl)imidazole-4-carboxamide from 5-amino-1-(5-phospho-D-ribosyl)imidazole-4-carboxamide (10-formyl THF route): step 1/1. It participates in purine metabolism; IMP biosynthesis via de novo pathway; IMP from 5-formamido-1-(5-phospho-D-ribosyl)imidazole-4-carboxamide: step 1/1. This chain is Bifunctional purine biosynthesis protein PurH, found in Oceanobacillus iheyensis (strain DSM 14371 / CIP 107618 / JCM 11309 / KCTC 3954 / HTE831).